A 307-amino-acid polypeptide reads, in one-letter code: Ribonuclease Z (307 aa).

The Zn(2+) site is built by H63, H65, D67, H68, H141, D212, and H270. The Proton acceptor role is filled by D67.

Belongs to the RNase Z family. In terms of assembly, homodimer. It depends on Zn(2+) as a cofactor.

The enzyme catalyses Endonucleolytic cleavage of RNA, removing extra 3' nucleotides from tRNA precursor, generating 3' termini of tRNAs. A 3'-hydroxy group is left at the tRNA terminus and a 5'-phosphoryl group is left at the trailer molecule.. Functionally, zinc phosphodiesterase, which displays some tRNA 3'-processing endonuclease activity. Probably involved in tRNA maturation, by removing a 3'-trailer from precursor tRNA. The sequence is that of Ribonuclease Z from Bacillus cereus (strain G9842).